Consider the following 154-residue polypeptide: Ribosome maturation factor RimP (154 aa).

This sequence belongs to the RimP family.

The protein resides in the cytoplasm. Its function is as follows. Required for maturation of 30S ribosomal subunits. This Cyanothece sp. (strain PCC 7425 / ATCC 29141) protein is Ribosome maturation factor RimP.